A 310-amino-acid polypeptide reads, in one-letter code: UDP-N-acetylenolpyruvoylglucosamine reductase (310 aa).

An FAD-binding PCMH-type domain is found at R30–G200. R179 is a catalytic residue. S230 acts as the Proton donor in catalysis. E300 is a catalytic residue.

This sequence belongs to the MurB family. FAD serves as cofactor.

It is found in the cytoplasm. It carries out the reaction UDP-N-acetyl-alpha-D-muramate + NADP(+) = UDP-N-acetyl-3-O-(1-carboxyvinyl)-alpha-D-glucosamine + NADPH + H(+). The protein operates within cell wall biogenesis; peptidoglycan biosynthesis. Its function is as follows. Cell wall formation. The chain is UDP-N-acetylenolpyruvoylglucosamine reductase from Synechococcus sp. (strain WH7803).